Consider the following 405-residue polypeptide: MHSSSSFIITSLEEEEKKPPAHHLHQQSIEDVGSVTSSATLLLLDSATWMMPSSTTQPHISEISGNECAACAQPILDRYVFTVLGKCWHQSCLRCCDCRAPMSMTCFSRDGLILCKTDFSRRYSQRCAGCDGKLEKEDLVRRARDKVFHIRCFQCSVCQRLLDTGDQLYIMEGNRFVCQSDFQTATKTSTPTSIHRPVSNGSECNSDVEEDNVDACDEVGLDDGEGDCGKDNSDDSNSAKRRGPRTTIKAKQLETLKNAFAATPKPTRHIREQLAAETGLNMRVIQVWFQNRRSKERRMKQLRFGGYRQSRRPRRDDIVDMFPNDQQFYPPPPPSNVQFFCDPYTTSPNNPETIQMAPQFAVPTENMNMVPEPYTEQSATPPEFNEDTFACIYSTDLGKPTPVSW.

Glycyl lysine isopeptide (Lys-Gly) (interchain with G-Cter in SUMO) cross-links involve residues K17 and K18. LIM zinc-binding domains follow at residues 68–124 (CAAC…RRYS) and 127–187 (CAGC…TATK). The segment covering 189–205 (STPTSIHRPVSNGSECN) has biased composition (polar residues). 2 disordered regions span residues 189-208 (STPTSIHRPVSNGSECNSDV) and 224-246 (GEGDCGKDNSDDSNSAKRRGPRT). The segment at residues 241 to 300 (RRGPRTTIKAKQLETLKNAFAATPKPTRHIREQLAAETGLNMRVIQVWFQNRRSKERRMK) is a DNA-binding region (homeobox).

In terms of tissue distribution, expressed in ADL, AVJL, AIZL, RICL, RIF and AVG neurons.

The protein localises to the nucleus. Its function is as follows. Probable transcription factor which is required for asymmetric division of vulval blast cells. Involved in olfactory plasticity probably by regulating the expression of transcription factor mbr-1 in RIF neurons. Plays a role in the chemorepulsive response toward ascaroside pheromones mediated by the ADL sensory neurons, probably by regulating E-box motif 5'-CANNTG-3' containing target genes in the ADL neurons. Plays a role in the differentiation of the ADL sensory neurons. The sequence is that of Protein lin-11 (lin-11) from Caenorhabditis elegans.